We begin with the raw amino-acid sequence, 85 residues long: Elongation factor 1-beta (85 aa).

Belongs to the EF-1-beta/EF-1-delta family.

Promotes the exchange of GDP for GTP in EF-1-alpha/GDP, thus allowing the regeneration of EF-1-alpha/GTP that could then be used to form the ternary complex EF-1-alpha/GTP/AAtRNA. This Methanoregula boonei (strain DSM 21154 / JCM 14090 / 6A8) protein is Elongation factor 1-beta.